The chain runs to 319 residues: Acetyl esterase (319 aa).

The Involved in the stabilization of the negatively charged intermediate by the formation of the oxyanion hole motif lies at 91 to 93 (HGG). Catalysis depends on residues Ser165, Asp262, and His292.

The protein belongs to the 'GDXG' lipolytic enzyme family. In terms of assembly, homodimer. Interacts with MalT and MelA.

It is found in the cytoplasm. Functionally, displays esterase activity towards short chain fatty esters (acyl chain length of up to 8 carbons). Able to hydrolyze triacetylglycerol (triacetin) and tributyrylglycerol (tributyrin), but not trioleylglycerol (triolein) or cholesterol oleate. Negatively regulates MalT activity by antagonizing maltotriose binding. Inhibits MelA galactosidase activity. In Shigella flexneri, this protein is Acetyl esterase.